Here is a 193-residue protein sequence, read N- to C-terminus: Recombination protein RecR (193 aa).

The C4-type zinc-finger motif lies at 61–76; sequence CSSCNALSESEVCEIC. The region spanning 84-170 is the Toprim domain; sequence SQLCMVLHPR…TFTKIAQGVP (87 aa).

The protein belongs to the RecR family.

May play a role in DNA repair. It seems to be involved in an RecBC-independent recombinational process of DNA repair. It may act with RecF and RecO. This Helicobacter pylori (strain P12) protein is Recombination protein RecR.